The sequence spans 127 residues: Dual endothelin-1/VEGF signal peptide receptor (127 aa).

At 1–69 (MSTFYVTAVP…EMKSRWNWGS (69 aa)) the chain is on the extracellular side. Residues 70 to 88 (ITCIMCFTCVGSQLSMSSS) traverse the membrane as a helical segment. Topologically, residues 89–127 (KASNFSGPLQLYQRGIGHITNPYRRPPAPAWPCSSSGTT) are cytoplasmic.

Prominently expressed in brain and heart tissues. Weakly expressed in aorta, adrenal gland, and lung tissues.

It localises to the cell membrane. Its function is as follows. In the Dahl salt-resistant strain, acts as a dual receptor for both endothelin-1 and the signal sequence of vascular endothelial growth factor A and does not act as a receptor for angiotensin-2. Does not bind the VEGFA mature protein. In the Dahl salt-sensitive strain, acts as a dual endothelin-1/angiotensin-2 receptor that is functionally coupled to a calcium-mobilizing transduction system, responding equivalently to both endothelin-1/EDN1 and angiotensin-2 peptides in a highly specific manner. May play a role in angiogenesis with a significant role in cardiovascular and neural development. This is Dual endothelin-1/VEGF signal peptide receptor from Rattus norvegicus (Rat).